The chain runs to 268 residues: Ribosomal RNA small subunit methyltransferase A (268 aa).

Positions 12, 14, 38, 59, 82, and 107 each coordinate S-adenosyl-L-methionine.

The protein belongs to the class I-like SAM-binding methyltransferase superfamily. rRNA adenine N(6)-methyltransferase family. RsmA subfamily.

The protein resides in the cytoplasm. The catalysed reaction is adenosine(1518)/adenosine(1519) in 16S rRNA + 4 S-adenosyl-L-methionine = N(6)-dimethyladenosine(1518)/N(6)-dimethyladenosine(1519) in 16S rRNA + 4 S-adenosyl-L-homocysteine + 4 H(+). Functionally, specifically dimethylates two adjacent adenosines (A1518 and A1519) in the loop of a conserved hairpin near the 3'-end of 16S rRNA in the 30S particle. May play a critical role in biogenesis of 30S subunits. In Aster yellows witches'-broom phytoplasma (strain AYWB), this protein is Ribosomal RNA small subunit methyltransferase A.